Consider the following 557-residue polypeptide: Formate--tetrahydrofolate ligase (557 aa).

An ATP-binding site is contributed by 66 to 73 (TPAGEGKS).

It belongs to the formate--tetrahydrofolate ligase family.

It carries out the reaction (6S)-5,6,7,8-tetrahydrofolate + formate + ATP = (6R)-10-formyltetrahydrofolate + ADP + phosphate. It functions in the pathway one-carbon metabolism; tetrahydrofolate interconversion. This is Formate--tetrahydrofolate ligase from Clostridium botulinum (strain ATCC 19397 / Type A).